Consider the following 273-residue polypeptide: Putative pyruvate, phosphate dikinase regulatory protein (273 aa).

Gly-149–Thr-156 is a binding site for ADP.

This sequence belongs to the pyruvate, phosphate/water dikinase regulatory protein family. PDRP subfamily.

It carries out the reaction N(tele)-phospho-L-histidyl/L-threonyl-[pyruvate, phosphate dikinase] + ADP = N(tele)-phospho-L-histidyl/O-phospho-L-threonyl-[pyruvate, phosphate dikinase] + AMP + H(+). The enzyme catalyses N(tele)-phospho-L-histidyl/O-phospho-L-threonyl-[pyruvate, phosphate dikinase] + phosphate + H(+) = N(tele)-phospho-L-histidyl/L-threonyl-[pyruvate, phosphate dikinase] + diphosphate. Its function is as follows. Bifunctional serine/threonine kinase and phosphorylase involved in the regulation of the pyruvate, phosphate dikinase (PPDK) by catalyzing its phosphorylation/dephosphorylation. In Rickettsia massiliae (strain Mtu5), this protein is Putative pyruvate, phosphate dikinase regulatory protein.